Here is a 737-residue protein sequence, read N- to C-terminus: Dynein axonemal intermediate chain 7 homolog (737 aa).

Positions 1-15 are enriched in polar residues; that stretch reads MPPKSPNRSGKSTPT. 3 disordered regions span residues 1 to 61, 274 to 362, and 410 to 452; these read MPPK…ERRA, KKVK…DDEE, and STVK…QQPP. Composition is skewed to basic and acidic residues over residues 18–61, 276–316, and 333–349; these read RPGE…ERRA, VKDE…EGRQ, and EETKKDENEGEKEDAVK. 2 stretches are compositionally biased toward polar residues: residues 417 to 429 and 441 to 451; these read DNPNTGRSSSRVA and PSKTPLEQQQP.

It belongs to the DNAI7 family.

The polypeptide is Dynein axonemal intermediate chain 7 homolog (AXP83.9) (Ciona intestinalis (Transparent sea squirt)).